Here is a 226-residue protein sequence, read N- to C-terminus: Large ribosomal subunit protein uL1 (226 aa).

Belongs to the universal ribosomal protein uL1 family. Part of the 50S ribosomal subunit.

In terms of biological role, binds directly to 23S rRNA. Probably involved in E site tRNA release. Protein L1 is also a translational repressor protein, it controls the translation of its operon by binding to its mRNA. This Korarchaeum cryptofilum (strain OPF8) protein is Large ribosomal subunit protein uL1.